A 206-amino-acid chain; its full sequence is Uridine kinase (206 aa).

9 to 16 (GGSGSGKT) provides a ligand contact to ATP.

It belongs to the uridine kinase family.

It is found in the cytoplasm. The catalysed reaction is uridine + ATP = UMP + ADP + H(+). The enzyme catalyses cytidine + ATP = CMP + ADP + H(+). It participates in pyrimidine metabolism; CTP biosynthesis via salvage pathway; CTP from cytidine: step 1/3. The protein operates within pyrimidine metabolism; UMP biosynthesis via salvage pathway; UMP from uridine: step 1/1. The sequence is that of Uridine kinase from Borrelia turicatae (strain 91E135).